Reading from the N-terminus, the 535-residue chain is CTP synthase (535 aa).

The segment at 1-267 is amidoligase domain; the sequence is MTKYIFVTGG…DQIVCDHLKL (267 aa). A CTP-binding site is contributed by serine 13. Serine 13 serves as a coordination point for UTP. 14 to 19 is an ATP binding site; that stretch reads SLGKGI. Tyrosine 54 contributes to the L-glutamine binding site. Aspartate 71 is a binding site for ATP. Aspartate 71 and glutamate 141 together coordinate Mg(2+). CTP is bound by residues 148 to 150, 188 to 193, and lysine 224; these read DIE and KTKPTQ. Residues 188–193 and lysine 224 each bind UTP; that span reads KTKPTQ. 240-242 provides a ligand contact to ATP; it reads RDA. One can recognise a Glutamine amidotransferase type-1 domain in the interval 292–534; sequence KIALVGKYVE…VRASITNKES (243 aa). An L-glutamine-binding site is contributed by glycine 354. Catalysis depends on cysteine 381, which acts as the Nucleophile; for glutamine hydrolysis. Residues 382 to 385, glutamate 405, and arginine 462 contribute to the L-glutamine site; that span reads LGMQ. Residues histidine 507 and glutamate 509 contribute to the active site.

The protein belongs to the CTP synthase family. Homotetramer.

It carries out the reaction UTP + L-glutamine + ATP + H2O = CTP + L-glutamate + ADP + phosphate + 2 H(+). The catalysed reaction is L-glutamine + H2O = L-glutamate + NH4(+). It catalyses the reaction UTP + NH4(+) + ATP = CTP + ADP + phosphate + 2 H(+). The protein operates within pyrimidine metabolism; CTP biosynthesis via de novo pathway; CTP from UDP: step 2/2. With respect to regulation, allosterically activated by GTP, when glutamine is the substrate; GTP has no effect on the reaction when ammonia is the substrate. The allosteric effector GTP functions by stabilizing the protein conformation that binds the tetrahedral intermediate(s) formed during glutamine hydrolysis. Inhibited by the product CTP, via allosteric rather than competitive inhibition. In terms of biological role, catalyzes the ATP-dependent amination of UTP to CTP with either L-glutamine or ammonia as the source of nitrogen. Regulates intracellular CTP levels through interactions with the four ribonucleotide triphosphates. This is CTP synthase from Bacillus cereus (strain AH187).